An 843-amino-acid polypeptide reads, in one-letter code: General transcription and DNA repair factor IIH helicase/translocase subunit XPB/SSL2 (843 aa).

Residues 1-85 (MTDVEGYQPK…TAADSSMNQM (85 aa)) are disordered. A compositionally biased stretch (acidic residues) spans 26 to 41 (SDEDSPATDAEIDENY). The span at 42–56 (DDNRETSEGRGERDT) shows a compositional bias: basic and acidic residues. Residues 64-74 (KKPRKKTKSSR) show a composition bias toward basic residues. The Nuclear localization signal motif lies at 64–75 (KKPRKKTKSSRH). Residues 373–535 (MFGNGRARSG…DLNFLIGPKL (163 aa)) form the Helicase ATP-binding domain. An ATP-binding site is contributed by 386-393 (LPCGAGKT). A DEAH box motif is present at residues 488 to 491 (DEVH). Positions 589 to 743 (QACQFLIQYH…KVITHLHGME (155 aa)) constitute a Helicase C-terminal domain. A Phosphoserine modification is found at Ser-752.

Belongs to the helicase family. RAD25/XPB subfamily. In terms of assembly, component of the 7-subunit TFIIH core complex composed of XPB/SSL2, XPD/RAD3, SSL1, TFB1, TFB2, TFB4 and TFB5, which is active in NER. The core complex associates with the 3-subunit CTD-kinase module TFIIK composed of CCL1, KIN28 and TFB3 to form the 10-subunit holoenzyme (holo-TFIIH) active in transcription. An additionnal subunit, TFB6, plays a role in the dissociation of the SSL2 helicase from TFIIH after transcription initiation. Interacts directly with TFB6. Mg(2+) serves as cofactor.

It localises to the nucleus. The enzyme catalyses Couples ATP hydrolysis with the unwinding of duplex DNA by translocating in the 3'-5' direction.. It carries out the reaction ATP + H2O = ADP + phosphate + H(+). In terms of biological role, ATP-dependent DNA translocase. Component of the general transcription and DNA repair factor IIH (TFIIH) core complex. When complexed to CDK-activating kinase (CAK), involved in RNA transcription by RNA polymerase II. May have 3'-5' helicase activity alone, the TFIIH core however has no 3'-5' helicase activity. Also involved in transcription-coupled nucleotide excision repair (NER) of damaged DNA. In NER, TFIIH acts by opening DNA around the lesion to allow the excision of the damaged oligonucleotide and its replacement by a new DNA fragment. The ATPase activity of XPB/SSL2, but not its helicase activity, is required for DNA opening. In transcription, TFIIH has an essential role in transcription initiation. When the pre-initiation complex (PIC) has been established, TFIIH is required for promoter opening and promoter escape. The ATP-dependent helicase activity of XPB/SSL2 is required for promoter opening and promoter escape. XPB/SSL2 acts as a double-stranded DNA translocase, promoting DNA opening by tracking in a 5'-3' dirction along the nontemplate promoter strand, rotating and inserting DNA into the Pol II active site cleft, leading to DNA unwinding. A dsDNA-stimulated ATPase, dATP and ATP are equally good substrates. May also use this translocase mechanism during DNA repair rather than physically wedging open damaged DNA. The sequence is that of General transcription and DNA repair factor IIH helicase/translocase subunit XPB/SSL2 from Saccharomyces cerevisiae (strain ATCC 204508 / S288c) (Baker's yeast).